Here is a 201-residue protein sequence, read N- to C-terminus: Ciliary microtubule inner protein 2C (201 aa).

Belongs to the CIMIP2 family. As to quaternary structure, microtubule inner protein component of sperm flagellar doublet microtubules. In terms of tissue distribution, expressed in airway epithelial cells.

Its subcellular location is the cytoplasm. It is found in the cytoskeleton. The protein localises to the cilium axoneme. It localises to the flagellum axoneme. Functionally, microtubule inner protein (MIP) part of the dynein-decorated doublet microtubules (DMTs) in cilia axoneme, which is required for motile cilia beating. Binds to the intra-tubulin interfaces. The polypeptide is Ciliary microtubule inner protein 2C (Homo sapiens (Human)).